The sequence spans 420 residues: Deoxyribodipyrimidine photo-lyase (420 aa).

A Photolyase/cryptochrome alpha/beta domain is found at Gly2–Leu124. Positions Ala152–Pro175 are disordered. Over residues Gly159–Pro170 the composition is skewed to basic and acidic residues. Tyr197 serves as a coordination point for FAD. Residue Arg201 coordinates DNA. Residue Gly209–Ser213 participates in FAD binding. 2 interaction with DNA regions span residues Glu244–Ser251 and Asn310–Arg311. Asp341–Asp343 serves as a coordination point for FAD. Gln373 contacts DNA.

It belongs to the DNA photolyase class-1 family. In terms of assembly, monomer. FAD serves as cofactor.

The enzyme catalyses cyclobutadipyrimidine (in DNA) = 2 pyrimidine residues (in DNA).. Its function is as follows. Involved in repair of UV radiation-induced DNA damage. Catalyzes the light-dependent monomerization (300-600 nm) of cyclobutyl pyrimidine dimers (in cis-syn configuration), which are formed between adjacent bases on the same DNA strand upon exposure to ultraviolet radiation. This is Deoxyribodipyrimidine photo-lyase (phr) from Thermus thermophilus (strain ATCC BAA-163 / DSM 7039 / HB27).